We begin with the raw amino-acid sequence, 567 residues long: tRNA (uracil-O(2)-)-methyltransferase (567 aa).

At S107 the chain carries Phosphoserine.

The protein belongs to the TRM44 family.

It localises to the cytoplasm. The enzyme catalyses uridine(44) in tRNA(Ser) + S-adenosyl-L-methionine = 2'-O-methyluridine(44) in tRNA(Ser) + S-adenosyl-L-homocysteine + H(+). TRNA (uracil-O(2)-)-methyltransferase, which catalyzes the formation of O(2)-methyluracil at position 44 (Um44) in tRNA(Ser). This is tRNA (uracil-O(2)-)-methyltransferase (TRM44) from Saccharomyces cerevisiae (strain ATCC 204508 / S288c) (Baker's yeast).